Consider the following 270-residue polypeptide: uncharacterized protein (270 aa).

An N-terminal signal peptide occupies residues 1–22; sequence MEYIKKIALYMSVLLLIIFIGG. Cysteine 23 carries the N-palmitoyl cysteine lipid modification. Cysteine 23 is lipidated: S-diacylglycerol cysteine.

It belongs to the staphylococcal tandem lipoprotein family.

The protein resides in the cell membrane. This is an uncharacterized protein from Staphylococcus aureus (strain USA300).